Here is a 1147-residue protein sequence, read N- to C-terminus: Cellulose synthase-like protein D3 (1147 aa).

Disordered stretches follow at residues 1–33 (MSTG…PAGQ) and 259–281 (KLGG…PFKP). 2 stretches are compositionally biased toward gly residues: residues 14–29 (GGVG…GPRG) and 262–272 (GDGGGGGGGGP). 2 consecutive transmembrane segments (helical) span residues 292–312 (VISP…FYLT) and 322–342 (ALWL…SWLL). Residues Asp-422 and Asp-847 contribute to the active site. 6 helical membrane passes run 929 to 949 (IFLL…FFIV), 954 to 974 (IAFL…GILE), 1001 to 1021 (LYAV…SFTL), 1045 to 1065 (LLIP…FAFA), 1075 to 1095 (WGKF…LNPF), and 1108 to 1128 (TIVF…WVAI).

Belongs to the glycosyltransferase 2 family. Plant cellulose synthase-like D subfamily.

The protein localises to the golgi apparatus membrane. In terms of biological role, thought to be a Golgi-localized beta-glycan synthase that polymerize the backbones of noncellulosic polysaccharides (hemicelluloses) of plant cell wall. The protein is Cellulose synthase-like protein D3 (CSLD3) of Oryza sativa subsp. japonica (Rice).